The following is a 300-amino-acid chain: tRNA pseudouridine synthase A (300 aa).

Residue Asp-67 is the Nucleophile of the active site. Substrate is bound at residue Tyr-125.

Belongs to the tRNA pseudouridine synthase TruA family. In terms of assembly, homodimer.

The enzyme catalyses uridine(38/39/40) in tRNA = pseudouridine(38/39/40) in tRNA. In terms of biological role, formation of pseudouridine at positions 38, 39 and 40 in the anticodon stem and loop of transfer RNAs. The chain is tRNA pseudouridine synthase A from Synechococcus sp. (strain CC9902).